The chain runs to 345 residues: Phosphoribosylformylglycinamidine cyclo-ligase (345 aa).

The protein belongs to the AIR synthase family.

The protein localises to the cytoplasm. It catalyses the reaction 2-formamido-N(1)-(5-O-phospho-beta-D-ribosyl)acetamidine + ATP = 5-amino-1-(5-phospho-beta-D-ribosyl)imidazole + ADP + phosphate + H(+). It participates in purine metabolism; IMP biosynthesis via de novo pathway; 5-amino-1-(5-phospho-D-ribosyl)imidazole from N(2)-formyl-N(1)-(5-phospho-D-ribosyl)glycinamide: step 2/2. The protein is Phosphoribosylformylglycinamidine cyclo-ligase of Synechococcus sp. (strain CC9605).